Consider the following 426-residue polypeptide: MLKLNLEGIYNFLDWRKHTQTYAPQIKSIHQKLHQDKQLKEKYLGWLELPLHFDFKEIEKMKQLKNFHPNLDVLVVIGIGGSYLGAKAGIEFLQTPFKKTKPEILFAGHQVSGNYLTNLLHFLKNKNWAINVISKSGTTLEPALAFRILKKEIEEKYGKQLAKNRIFVTTDSQKGVLLNLALKEGYQTFVIPDSVGGRFSVFTSVGILPFVFANLDVASMMKGALQSYHDTFQEDLLQNQAYKYALARYLFHTQQNKKMEILVSYEPNLLSFSEWWKQLFAESEGKEEKGLFVGATNNSTDLHSLGQFIQEGTKMLFETVLNVSSIKDDCVVPHILNELDNLNYVAGKTYSQINQKILQATRQAHIEGKVPNLEIVIPTLDAYHFGYLAYFFQKACAMSGLLLGINPFNQHGVEIYKQKMFALLKP.

The active-site Proton donor is Glu-282. Residues His-303 and Lys-417 contribute to the active site.

It belongs to the GPI family.

The protein resides in the cytoplasm. The enzyme catalyses alpha-D-glucose 6-phosphate = beta-D-fructose 6-phosphate. It functions in the pathway carbohydrate biosynthesis; gluconeogenesis. It participates in carbohydrate degradation; glycolysis; D-glyceraldehyde 3-phosphate and glycerone phosphate from D-glucose: step 2/4. Functionally, catalyzes the reversible isomerization of glucose-6-phosphate to fructose-6-phosphate. In Aster yellows witches'-broom phytoplasma (strain AYWB), this protein is Glucose-6-phosphate isomerase.